Consider the following 183-residue polypeptide: Interleukin-24 (183 aa).

The N-terminal stretch at 1–28 (MQTSLRQQILPGLSLILLVLNQVPELQG) is a signal peptide. A disulfide bridge links Cys-36 with Cys-83. An N-linked (GlcNAc...) asparagine glycan is attached at Asn-76. Lys-99 is covalently cross-linked (Glycyl lysine isopeptide (Lys-Gly) (interchain with G-Cter in ubiquitin)).

Belongs to the IL-10 family. In terms of processing, glycosylated. Post-translationally, ubiquitination at Lys-99 promotes proteasomal degradation.

The protein resides in the secreted. Its function is as follows. Multifunctional cytokine mainly produced by T-cells that plays a regulatory role in immune response, tissue homeostasis, host defense, and oncogenesis. Possesses antiviral functions and induces the type I interferon response during influenza infection. Signals through two receptor complexes IL20RA/IL20RB or IL20RB/IL22RA1. In turn, stimulates the JAK1-STAT3 and MAPK pathways and promotes the secretion of pro-inflammatory mediators including IL8 and MMP1. Intracellularly, maintains endoplasmic reticulum homeostasis by restricting the eIF2alpha-CHOP pathway-mediated stress signal. In addition, acts as a quality control mechanism for the ubiquitin proteasome system by alerting the cell to proteasome dysfunction through activation of PKR/EIF2AK2. In Rattus norvegicus (Rat), this protein is Interleukin-24 (Il24).